Here is a 2183-residue protein sequence, read N- to C-terminus: Genome polyprotein (2183 aa).

The N-myristoyl glycine; by host moiety is linked to residue G2. Topologically, residues 2–1493 (GAQVSTQKTG…HVSRAFICLQ (1492 aa)) are cytoplasmic. The segment at 566–582 (FYQGPTEESVERAMGRV) is amphipathic alpha-helix. Residues H870 and D888 each act as for protease 2A activity in the active site. C905 and C907 together coordinate Zn(2+). The For protease 2A activity role is filled by C959. 2 residues coordinate Zn(2+): C965 and H967. The interval 1099-1171 (NNGWLKKFTE…EQSAPSQSDQ (73 aa)) is membrane-binding. Residues 1099–1237 (NNGWLKKFTE…SPGAGKSVAT (139 aa)) form an oligomerization region. An RNA-binding region spans residues 1120-1124 (AVKIQ). Residues 1203-1359 (EKKMSNYIQF…SMYSQNGKIN (157 aa)) form the SF3 helicase domain. C1367, C1379, and C1384 together coordinate Zn(2+). Residues 1367-1384 (CDEECCPVNFKRCCPLVC) form a C4-type; degenerate zinc finger. The interval 1411–1418 (EYNHRHSV) is RNA-binding. Residues 1422–1427 (LEALFQ) are oligomerization. Residues 1494-1509 (ALTTFVSVAGIIYIIY) lie within the membrane without spanning it. Residues 1510–2183 (KLFAGFQGAY…TLRRKWLDSF (674 aa)) lie on the Cytoplasmic side of the membrane. Y1519 is modified (O-(5'-phospho-RNA)-tyrosine). A Peptidase C3 domain is found at 1539-1717 (GPAFEFAVAM…FSAGLLKHYF (179 aa)). Catalysis depends on for protease 3C activity residues H1578, E1609, and C1685. The region spanning 1948–2064 (GHLIAFDYSG…SYPWPIDASL (117 aa)) is the RdRp catalytic domain. Residues D1954 and D2050 each contribute to the Mg(2+) site.

This sequence belongs to the picornaviruses polyprotein family. In terms of assembly, interacts with capsid protein VP1 and capsid protein VP3 to form heterotrimeric protomers. Interacts with capsid protein VP0, and capsid protein VP3 to form heterotrimeric protomers. Five protomers subsequently associate to form pentamers which serve as building blocks for the capsid. Interacts with capsid protein VP2, capsid protein VP3 and capsid protein VP4 following cleavage of capsid protein VP0. Interacts with host CXADR. As to quaternary structure, interacts with capsid protein VP1 and capsid protein VP3 in the mature capsid. In terms of assembly, interacts with capsid protein VP0 and capsid protein VP1 to form heterotrimeric protomers. Five protomers subsequently associate to form pentamers which serve as building blocks for the capsid. Interacts with capsid protein VP4 in the mature capsid. Interacts with protein 2C; this interaction may be important for virion morphogenesis. Interacts with capsid protein VP1 and capsid protein VP3. As to quaternary structure, homodimer. In terms of assembly, homohexamer; forms a hexameric ring structure with 6-fold symmetry characteristic of AAA+ ATPases. Interacts (via N-terminus) with host RTN3 (via reticulon domain); this interaction is important for viral replication. Interacts with capsid protein VP3; this interaction may be important for virion morphogenesis. Interacts with protein 3CD. As to quaternary structure, homodimer. Interacts with host GBF1. Interacts (via GOLD domain) with host ACBD3 (via GOLD domain); this interaction allows the formation of a viral protein 3A/ACBD3 heterotetramer with a 2:2 stoichiometry, which will stimulate the recruitment of host PI4KB in order to synthesize PI4P at the viral RNA replication sites. In terms of assembly, interacts with RNA-directed RNA polymerase. Interacts with protein 3AB and with RNA-directed RNA polymerase. As to quaternary structure, interacts with Viral protein genome-linked and with protein 3CD. Mg(2+) is required as a cofactor. In terms of processing, specific enzymatic cleavages in vivo by the viral proteases yield processing intermediates and the mature proteins. Post-translationally, myristoylation is required for the formation of pentamers during virus assembly. Further assembly of 12 pentamers and a molecule of genomic RNA generates the provirion. During virion maturation, immature virions are rendered infectious following cleavage of VP0 into VP4 and VP2. This maturation seems to be an autocatalytic event triggered by the presence of RNA in the capsid and it is followed by a conformational change infectious virion. In terms of processing, myristoylation is required during RNA encapsidation and formation of the mature virus particle. Post-translationally, VPg is uridylylated by the polymerase into VPg-pUpU. This acts as a nucleotide-peptide primer for the genomic RNA replication.

Its subcellular location is the virion. The protein localises to the host cytoplasm. It localises to the host cytoplasmic vesicle membrane. It is found in the host nucleus. The catalysed reaction is a ribonucleoside 5'-triphosphate + H2O = a ribonucleoside 5'-diphosphate + phosphate + H(+). It catalyses the reaction Selective cleavage of Tyr-|-Gly bond in the picornavirus polyprotein.. It carries out the reaction RNA(n) + a ribonucleoside 5'-triphosphate = RNA(n+1) + diphosphate. The enzyme catalyses Selective cleavage of Gln-|-Gly bond in the poliovirus polyprotein. In other picornavirus reactions Glu may be substituted for Gln, and Ser or Thr for Gly.. Replication or transcription is subject to high level of random mutations by the nucleotide analog ribavirin. Its function is as follows. Forms an icosahedral capsid of pseudo T=3 symmetry with capsid proteins VP2 and VP3. The capsid is 300 Angstroms in diameter, composed of 60 copies of each capsid protein and enclosing the viral positive strand RNA genome. Capsid protein VP1 mainly forms the vertices of the capsid. Capsid protein VP1 interacts with host CXADR to provide virion attachment to target host cells. This attachment induces virion internalization. Tyrosine kinases are probably involved in the entry process. After binding to its receptor, the capsid undergoes conformational changes. Capsid protein VP1 N-terminus (that contains an amphipathic alpha-helix) and capsid protein VP4 are externalized. Together, they shape a pore in the host membrane through which viral genome is translocated to host cell cytoplasm. Functionally, forms an icosahedral capsid of pseudo T=3 symmetry with capsid proteins VP2 and VP3. The capsid is 300 Angstroms in diameter, composed of 60 copies of each capsid protein and enclosing the viral positive strand RNA genome. In terms of biological role, lies on the inner surface of the capsid shell. After binding to the host receptor, the capsid undergoes conformational changes. Capsid protein VP4 is released, Capsid protein VP1 N-terminus is externalized, and together, they shape a pore in the host membrane through which the viral genome is translocated into the host cell cytoplasm. Component of immature procapsids, which is cleaved into capsid proteins VP4 and VP2 after maturation. Allows the capsid to remain inactive before the maturation step. Its function is as follows. Cysteine protease that cleaves viral polyprotein and specific host proteins. It is responsible for the autocatalytic cleavage between the P1 and P2 regions, which is the first cleavage occurring in the polyprotein. Also cleaves the host translation initiation factor EIF4G1, in order to shut down the capped cellular mRNA translation. Inhibits the host nucleus-cytoplasm protein and RNA trafficking by cleaving host members of the nuclear pores. Counteracts stress granule formation probably by antagonizing its assembly or promoting its dissassembly. Cleaves and inhibits host IFIH1/MDA5, thereby inhibiting the type-I IFN production and the establishment of the antiviral state. Cleaves and inhibits host MAVS, thereby inhibiting the type-I IFN production and the establishment of the antiviral state. Functionally, plays an essential role in the virus replication cycle by acting as a viroporin. Creates a pore in the host endoplasmic reticulum and as a consequence releases Ca2+ in the cytoplasm of infected cell. In turn, high levels of cytoplasmic calcium may trigger membrane trafficking and transport of viral ER-associated proteins to viroplasms, sites of viral genome replication. In terms of biological role, induces and associates with structural rearrangements of intracellular membranes. Displays RNA-binding, nucleotide binding and NTPase activities. May play a role in virion morphogenesis and viral RNA encapsidation by interacting with the capsid protein VP3. Localizes the viral replication complex to the surface of membranous vesicles. Together with protein 3CD binds the Cis-Active RNA Element (CRE) which is involved in RNA synthesis initiation. Acts as a cofactor to stimulate the activity of 3D polymerase, maybe through a nucleid acid chaperone activity. Its function is as follows. Localizes the viral replication complex to the surface of membranous vesicles. It inhibits host cell endoplasmic reticulum-to-Golgi apparatus transport and causes the disassembly of the Golgi complex, possibly through GBF1 interaction. This would result in depletion of MHC, trail receptors and IFN receptors at the host cell surface. Plays an essential role in viral RNA replication by recruiting ACBD3 and PI4KB at the viral replication sites, thereby allowing the formation of the rearranged membranous structures where viral replication takes place. Functionally, acts as a primer for viral RNA replication and remains covalently bound to viral genomic RNA. VPg is uridylylated prior to priming replication into VPg-pUpU. The oriI viral genomic sequence may act as a template for this. The VPg-pUpU is then used as primer on the genomic RNA poly(A) by the RNA-dependent RNA polymerase to replicate the viral genome. During genome replication, the VPg-RNA linkage is removed by the host TDP2, thereby accelerating replication. During the late stage of the replication cycle, host TDP2 is excluded from sites of viral RNA synthesis and encapsidation, allowing for the generation of progeny virions. In terms of biological role, involved in the viral replication complex and viral polypeptide maturation. It exhibits protease activity with a specificity and catalytic efficiency that is different from protease 3C. Protein 3CD lacks polymerase activity. Protein 3CD binds to the 5'UTR of the viral genome. Replicates the viral genomic RNA on the surface of intracellular membranes. May form linear arrays of subunits that propagate along a strong head-to-tail interaction called interface-I. Covalently attaches UMP to a tyrosine of VPg, which is used to prime RNA synthesis. The positive stranded RNA genome is first replicated at virus induced membranous vesicles, creating a dsRNA genomic replication form. This dsRNA is then used as template to synthesize positive stranded RNA genomes. ss(+)RNA genomes are either translated, replicated or encapsidated. Its function is as follows. Major viral protease that mediates proteolytic processing of the polyprotein. Cleaves host EIF5B, contributing to host translation shutoff. Also cleaves host PABPC1, contributing to host translation shutoff. Cleaves host NLRP1, triggers host N-glycine-mediated degradation of the autoinhibitory NLRP1 N-terminal fragment. This chain is Genome polyprotein, found in Coxsackievirus B4 (strain JVB / Benschoten / New York/51).